The primary structure comprises 70 residues: NAD(P)H-quinone oxidoreductase subunit L (70 aa).

2 helical membrane-spanning segments follow: residues 2 to 22 (IVPLLYLALAGAYLLVVPVAL) and 39 to 59 (TFMYFLVFLFFPGLLVLSPFV).

This sequence belongs to the complex I NdhL subunit family. As to quaternary structure, NDH-1 can be composed of about 15 different subunits; different subcomplexes with different compositions have been identified which probably have different functions.

The protein resides in the cellular thylakoid membrane. The catalysed reaction is a plastoquinone + NADH + (n+1) H(+)(in) = a plastoquinol + NAD(+) + n H(+)(out). The enzyme catalyses a plastoquinone + NADPH + (n+1) H(+)(in) = a plastoquinol + NADP(+) + n H(+)(out). NDH-1 shuttles electrons from an unknown electron donor, via FMN and iron-sulfur (Fe-S) centers, to quinones in the respiratory and/or the photosynthetic chain. The immediate electron acceptor for the enzyme in this species is believed to be plastoquinone. Couples the redox reaction to proton translocation, and thus conserves the redox energy in a proton gradient. Cyanobacterial NDH-1 also plays a role in inorganic carbon-concentration. This is NAD(P)H-quinone oxidoreductase subunit L from Trichormus variabilis (strain ATCC 29413 / PCC 7937) (Anabaena variabilis).